A 488-amino-acid polypeptide reads, in one-letter code: Putative serine carboxypeptidase-like 30 (488 aa).

The N-terminal stretch at 1-28 (MDNHTKSFSSLLISLWFTALLILVEMVS) is a signal peptide. Intrachain disulfides connect C99/C368, C262/C275, and C299/C336. N-linked (GlcNAc...) asparagine glycosylation is present at N150. Residue S192 is part of the active site. N263 carries N-linked (GlcNAc...) asparagine glycosylation. Residues N364 and N375 are each glycosylated (N-linked (GlcNAc...) asparagine). Active-site residues include D405 and H457.

It belongs to the peptidase S10 family. As to expression, expression not detected.

The protein localises to the secreted. In terms of biological role, probable carboxypeptidase. The polypeptide is Putative serine carboxypeptidase-like 30 (SCPL30) (Arabidopsis thaliana (Mouse-ear cress)).